A 179-amino-acid chain; its full sequence is Large ribosomal subunit protein uL5 (179 aa).

This sequence belongs to the universal ribosomal protein uL5 family. In terms of assembly, part of the 50S ribosomal subunit; part of the 5S rRNA/L5/L18/L25 subcomplex. Contacts the 5S rRNA and the P site tRNA. Forms a bridge to the 30S subunit in the 70S ribosome.

In terms of biological role, this is one of the proteins that bind and probably mediate the attachment of the 5S RNA into the large ribosomal subunit, where it forms part of the central protuberance. In the 70S ribosome it contacts protein S13 of the 30S subunit (bridge B1b), connecting the 2 subunits; this bridge is implicated in subunit movement. Contacts the P site tRNA; the 5S rRNA and some of its associated proteins might help stabilize positioning of ribosome-bound tRNAs. The chain is Large ribosomal subunit protein uL5 from Clostridium novyi (strain NT).